Reading from the N-terminus, the 509-residue chain is Bifunctional purine biosynthesis protein PurH (509 aa).

The 144-residue stretch at 1-144 (MKRALISVSD…KNYAAVTVVV (144 aa)) folds into the MGS-like domain.

The protein belongs to the PurH family.

It catalyses the reaction (6R)-10-formyltetrahydrofolate + 5-amino-1-(5-phospho-beta-D-ribosyl)imidazole-4-carboxamide = 5-formamido-1-(5-phospho-D-ribosyl)imidazole-4-carboxamide + (6S)-5,6,7,8-tetrahydrofolate. The enzyme catalyses IMP + H2O = 5-formamido-1-(5-phospho-D-ribosyl)imidazole-4-carboxamide. The protein operates within purine metabolism; IMP biosynthesis via de novo pathway; 5-formamido-1-(5-phospho-D-ribosyl)imidazole-4-carboxamide from 5-amino-1-(5-phospho-D-ribosyl)imidazole-4-carboxamide (10-formyl THF route): step 1/1. It participates in purine metabolism; IMP biosynthesis via de novo pathway; IMP from 5-formamido-1-(5-phospho-D-ribosyl)imidazole-4-carboxamide: step 1/1. This is Bifunctional purine biosynthesis protein PurH from Listeria monocytogenes serovar 1/2a (strain ATCC BAA-679 / EGD-e).